The following is a 289-amino-acid chain: ATP phosphoribosyltransferase (289 aa).

Belongs to the ATP phosphoribosyltransferase family. Long subfamily. The cofactor is Mg(2+).

It is found in the cytoplasm. It catalyses the reaction 1-(5-phospho-beta-D-ribosyl)-ATP + diphosphate = 5-phospho-alpha-D-ribose 1-diphosphate + ATP. It participates in amino-acid biosynthesis; L-histidine biosynthesis; L-histidine from 5-phospho-alpha-D-ribose 1-diphosphate: step 1/9. Feedback inhibited by histidine. Catalyzes the condensation of ATP and 5-phosphoribose 1-diphosphate to form N'-(5'-phosphoribosyl)-ATP (PR-ATP). Has a crucial role in the pathway because the rate of histidine biosynthesis seems to be controlled primarily by regulation of HisG enzymatic activity. This chain is ATP phosphoribosyltransferase, found in Methanosarcina barkeri (strain Fusaro / DSM 804).